The following is a 326-amino-acid chain: DNA-directed RNA polymerase subunit alpha (326 aa).

The segment at 1-231 (MQTALLKPKI…DQLSVFAALE (231 aa)) is alpha N-terminal domain (alpha-NTD). The tract at residues 247-326 (IDPILLRPVD…ENWPPAGLDK (80 aa)) is alpha C-terminal domain (alpha-CTD).

It belongs to the RNA polymerase alpha chain family. As to quaternary structure, homodimer. The RNAP catalytic core consists of 2 alpha, 1 beta, 1 beta' and 1 omega subunit. When a sigma factor is associated with the core the holoenzyme is formed, which can initiate transcription.

It catalyses the reaction RNA(n) + a ribonucleoside 5'-triphosphate = RNA(n+1) + diphosphate. DNA-dependent RNA polymerase catalyzes the transcription of DNA into RNA using the four ribonucleoside triphosphates as substrates. The sequence is that of DNA-directed RNA polymerase subunit alpha from Cupriavidus pinatubonensis (strain JMP 134 / LMG 1197) (Cupriavidus necator (strain JMP 134)).